A 307-amino-acid chain; its full sequence is Small ribosomal subunit biogenesis GTPase RsgA (307 aa).

Residues arginine 85 to phenylalanine 242 form the CP-type G domain. Residues asparagine 135–aspartate 138 and glycine 184–threonine 192 contribute to the GTP site. Positions 266, 271, 273, and 279 each coordinate Zn(2+).

It belongs to the TRAFAC class YlqF/YawG GTPase family. RsgA subfamily. As to quaternary structure, monomer. Associates with 30S ribosomal subunit, binds 16S rRNA. Requires Zn(2+) as cofactor.

The protein localises to the cytoplasm. Its function is as follows. One of several proteins that assist in the late maturation steps of the functional core of the 30S ribosomal subunit. Helps release RbfA from mature subunits. May play a role in the assembly of ribosomal proteins into the subunit. Circularly permuted GTPase that catalyzes slow GTP hydrolysis, GTPase activity is stimulated by the 30S ribosomal subunit. The protein is Small ribosomal subunit biogenesis GTPase RsgA of Neisseria meningitidis serogroup C (strain 053442).